Here is a 115-residue protein sequence, read N- to C-terminus: Large ribosomal subunit protein bL20 (115 aa).

It belongs to the bacterial ribosomal protein bL20 family.

Functionally, binds directly to 23S ribosomal RNA and is necessary for the in vitro assembly process of the 50S ribosomal subunit. It is not involved in the protein synthesizing functions of that subunit. In Chlorobium limicola (strain DSM 245 / NBRC 103803 / 6330), this protein is Large ribosomal subunit protein bL20.